The sequence spans 210 residues: Uracil phosphoribosyltransferase (210 aa).

5-phospho-alpha-D-ribose 1-diphosphate contacts are provided by residues R78, R103, and 130–138; that span reads DPMLATGGT. Uracil-binding positions include I193 and 198–200; that span reads GDA. A 5-phospho-alpha-D-ribose 1-diphosphate-binding site is contributed by D199.

Belongs to the UPRTase family. Mg(2+) is required as a cofactor.

The enzyme catalyses UMP + diphosphate = 5-phospho-alpha-D-ribose 1-diphosphate + uracil. The protein operates within pyrimidine metabolism; UMP biosynthesis via salvage pathway; UMP from uracil: step 1/1. With respect to regulation, allosterically activated by GTP. Its function is as follows. Catalyzes the conversion of uracil and 5-phospho-alpha-D-ribose 1-diphosphate (PRPP) to UMP and diphosphate. This is Uracil phosphoribosyltransferase from Xanthomonas axonopodis pv. citri (strain 306).